The following is a 330-amino-acid chain: Transcription factor TGA5 (330 aa).

Polar residues predominate over residues 1–13 (MGDTSPRTSVSTD). The disordered stretch occupies residues 1-64 (MGDTSPRTSV…REAARKSRLR (64 aa)). The span at 35 to 47 (SSDRSKSKMDQKT) shows a compositional bias: basic and acidic residues. The 64-residue stretch at 44–107 (DQKTLRRLAQ…SSGDQAHSTA (64 aa)) folds into the bZIP domain. Coiled-coil stretches lie at residues 45–98 (QKTL…FISS) and 211–244 (EQQS…SLAD). Residues 46–66 (KTLRRLAQNREAARKSRLRKK) form a basic motif region. Residues 72 to 86 (LENSRLKLTQLEQEL) are leucine-zipper. The region spanning 111–327 (AMAFDVEYRR…RALSSLWLAR (217 aa)) is the DOG1 domain.

Belongs to the bZIP family. As to quaternary structure, binds DNA as a dimer. Interaction with the Dof domain protein OBP1 enhances the binding to the ocs element. Interacts with NPR1, NPR3 and NPR4. In terms of tissue distribution, predominantly expressed in roots.

Its subcellular location is the nucleus. Its function is as follows. Transcriptional activator that binds specifically to the DNA sequence 5'-TGACG-3'. Recognizes ocs elements like the as-1 motif of the cauliflower mosaic virus 35S promoter. Binding to the as-1-like cis elements mediate auxin- and salicylic acid-inducible transcription. May be involved in the induction of the systemic acquired resistance (SAR) via its interaction with NPR1. Could also bind to the Hex-motif (5'-TGACGTGG-3') another cis-acting element found in plant histone promoters. This is Transcription factor TGA5 (TGA5) from Arabidopsis thaliana (Mouse-ear cress).